Reading from the N-terminus, the 653-residue chain is E3 ubiquitin-protein ligase TRIM32 (653 aa).

At Ala2 the chain carries N-acetylalanine. The RING-type zinc-finger motif lies at 20 to 65 (CPICMESFTEEQLRPKLLHCGHTICRQCLEKLLASSINGVRCPFCS). Ser55 carries the phosphoserine; by CHEK2 modification. Zn(2+) contacts are provided by Cys100, Cys103, Cys123, and His128. Residues 103–133 (CGRRLPRQFCRSCGLVLCEPCREADHQPPGH) form a B box-type zinc finger. The stretch at 138 to 197 (VKEAAEERRRDFGEKLTRLRELMGELQRRKAALEGVSKDLQARYKAVLQEYGHEERRVQD) forms a coiled coil. Phosphoserine occurs at positions 328, 335, and 339. NHL repeat units lie at residues 358–401 (LKKM…FTRK), 415–458 (DSFV…YTLD), 459–499 (GHCV…FTVD), 562–605 (GRQI…FPKG), and 606–646 (GGYS…YSYH).

The protein belongs to the TRIM/RBCC family. It self-associates. Interacts with DTNBP1. Interacts with PIAS4/PIASY upon treatment with UVB and TNF-alpha. Interacts with AMBRA1; promoting activation of ULK1 through unanchored 'Lys-63'-linked polyubiquitin chains. Interacts with TICAM1 and TAX1BP1; these interactions target TICAM1 to TAX1BP1-mediated selective autophagic degradation. As to quaternary structure, (Microbial infection) Interacts with S.typhimurium protein SseK3; SseK3 does not glycosylate TRIM32. In terms of processing, ubiquitinated. Post-translationally, phosphorylation at Ser-55 by CHEK2 under oxidative stress, activates the E3 ligase activity and promotes ATG7 ubiquitination leading to positive regulation of the autophagosme assembly. In terms of tissue distribution, spleen, thymus, prostate, testis, ovary, intestine, colon and skeletal muscle.

Its subcellular location is the cytoplasm. The protein localises to the mitochondrion. The protein resides in the endoplasmic reticulum. The catalysed reaction is S-ubiquitinyl-[E2 ubiquitin-conjugating enzyme]-L-cysteine + [acceptor protein]-L-lysine = [E2 ubiquitin-conjugating enzyme]-L-cysteine + N(6)-ubiquitinyl-[acceptor protein]-L-lysine.. It participates in protein modification; protein ubiquitination. E3 ubiquitin ligase that plays a role in various biological processes including neural stem cell differentiation, innate immunity, inflammatory resonse and autophagy. Plays a role in virus-triggered induction of IFN-beta and TNF-alpha by mediating the ubiquitination of STING1. Mechanistically, targets STING1 for 'Lys-63'-linked ubiquitination which promotes the interaction of STING1 with TBK1. Regulates bacterial clearance and promotes autophagy in Mycobacterium tuberculosis-infected macrophages. Negatively regulates TLR3/4-mediated innate immune and inflammatory response by triggering the autophagic degradation of TICAM1 in an E3 activity-independent manner. Plays an essential role in oxidative stress induced cell death by inducing loss of transmembrane potential and enhancing mitochondrial reactive oxygen species (ROS) production during oxidative stress conditions. Ubiquitinates XIAP and targets it for proteasomal degradation. Ubiquitinates DTNBP1 (dysbindin) and promotes its degradation. May ubiquitinate BBS2. Ubiquitinates PIAS4/PIASY and promotes its degradation in keratinocytes treated with UVB and TNF-alpha. Also acts as a regulator of autophagy by mediating formation of unanchored 'Lys-63'-linked polyubiquitin chains that activate ULK1: interaction with AMBRA1 is required for ULK1 activation. Positively regulates dendritic branching by promoting ubiquitination and subsequent degradation of the epigenetic factor CDYL. Under metabolic stress and phosphorylation by CHK2, mediates 'Lys-63'-linked ubiquitination of ATG7 at 'Lys-45' to initiate autophagy. In terms of biological role, (Microbial infection) May play a significant role in mediating the biological activity of the HIV-1 Tat protein in vivo. Binds specifically to the activation domain of HIV-1 Tat and can also interact with the HIV-2 and EIAV Tat proteins in vivo. The protein is E3 ubiquitin-protein ligase TRIM32 of Homo sapiens (Human).